Reading from the N-terminus, the 476-residue chain is Bifunctional protein GlmU (476 aa).

The interval 1-232 (MDNLAAIILA…PVEVMGINDR (232 aa)) is pyrophosphorylase. UDP-N-acetyl-alpha-D-glucosamine-binding positions include 9 to 12 (LAAG), Lys23, Gln75, and 80 to 81 (GT). Asp105 is a binding site for Mg(2+). UDP-N-acetyl-alpha-D-glucosamine-binding residues include Gly142, Glu157, Asn172, and Asn230. Asn230 lines the Mg(2+) pocket. The tract at residues 233–253 (VQLAEAARHARRRIAEEHMLN) is linker. An N-acetyltransferase region spans residues 254 to 476 (GVTLVDPAAT…EGWKLRKRDQ (223 aa)). Positions 353 and 371 each coordinate UDP-N-acetyl-alpha-D-glucosamine. His383 functions as the Proton acceptor in the catalytic mechanism. Residues Tyr386 and Asn397 each coordinate UDP-N-acetyl-alpha-D-glucosamine. Acetyl-CoA contacts are provided by residues 406–407 (NY), Ser425, Ala443, and Arg460.

In the N-terminal section; belongs to the N-acetylglucosamine-1-phosphate uridyltransferase family. It in the C-terminal section; belongs to the transferase hexapeptide repeat family. In terms of assembly, homotrimer. It depends on Mg(2+) as a cofactor.

It is found in the cytoplasm. It catalyses the reaction alpha-D-glucosamine 1-phosphate + acetyl-CoA = N-acetyl-alpha-D-glucosamine 1-phosphate + CoA + H(+). The catalysed reaction is N-acetyl-alpha-D-glucosamine 1-phosphate + UTP + H(+) = UDP-N-acetyl-alpha-D-glucosamine + diphosphate. It participates in nucleotide-sugar biosynthesis; UDP-N-acetyl-alpha-D-glucosamine biosynthesis; N-acetyl-alpha-D-glucosamine 1-phosphate from alpha-D-glucosamine 6-phosphate (route II): step 2/2. It functions in the pathway nucleotide-sugar biosynthesis; UDP-N-acetyl-alpha-D-glucosamine biosynthesis; UDP-N-acetyl-alpha-D-glucosamine from N-acetyl-alpha-D-glucosamine 1-phosphate: step 1/1. The protein operates within bacterial outer membrane biogenesis; LPS lipid A biosynthesis. Its function is as follows. Catalyzes the last two sequential reactions in the de novo biosynthetic pathway for UDP-N-acetylglucosamine (UDP-GlcNAc). The C-terminal domain catalyzes the transfer of acetyl group from acetyl coenzyme A to glucosamine-1-phosphate (GlcN-1-P) to produce N-acetylglucosamine-1-phosphate (GlcNAc-1-P), which is converted into UDP-GlcNAc by the transfer of uridine 5-monophosphate (from uridine 5-triphosphate), a reaction catalyzed by the N-terminal domain. The polypeptide is Bifunctional protein GlmU (Geobacter sulfurreducens (strain ATCC 51573 / DSM 12127 / PCA)).